The primary structure comprises 118 residues: Large ribosomal subunit protein bL19 (118 aa).

It belongs to the bacterial ribosomal protein bL19 family.

This protein is located at the 30S-50S ribosomal subunit interface and may play a role in the structure and function of the aminoacyl-tRNA binding site. The chain is Large ribosomal subunit protein bL19 from Metamycoplasma arthritidis (strain 158L3-1) (Mycoplasma arthritidis).